A 377-amino-acid chain; its full sequence is Succinyl-diaminopimelate desuccinylase (377 aa).

H71 serves as a coordination point for Zn(2+). D73 is a catalytic residue. D102 is a binding site for Zn(2+). Residue E132 is the Proton acceptor of the active site. Residues E133, E161, and H346 each coordinate Zn(2+).

It belongs to the peptidase M20A family. DapE subfamily. Homodimer. Zn(2+) serves as cofactor. It depends on Co(2+) as a cofactor.

The enzyme catalyses N-succinyl-(2S,6S)-2,6-diaminopimelate + H2O = (2S,6S)-2,6-diaminopimelate + succinate. The protein operates within amino-acid biosynthesis; L-lysine biosynthesis via DAP pathway; LL-2,6-diaminopimelate from (S)-tetrahydrodipicolinate (succinylase route): step 3/3. In terms of biological role, catalyzes the hydrolysis of N-succinyl-L,L-diaminopimelic acid (SDAP), forming succinate and LL-2,6-diaminopimelate (DAP), an intermediate involved in the bacterial biosynthesis of lysine and meso-diaminopimelic acid, an essential component of bacterial cell walls. The sequence is that of Succinyl-diaminopimelate desuccinylase from Rhizorhabdus wittichii (strain DSM 6014 / CCUG 31198 / JCM 15750 / NBRC 105917 / EY 4224 / RW1) (Sphingomonas wittichii).